The following is a 1021-amino-acid chain: Translation initiation factor IF-2 (1021 aa).

A disordered region spans residues 50–422 (AFPAEGGSAS…RMGAMVPRGN (373 aa)). Over residues 57–71 (SASGGRPGGRPGPGN) the composition is skewed to gly residues. The segment covering 75 to 95 (PAPPRPGLAPRPGPRPVPGRP) has biased composition (pro residues). The segment covering 96 to 112 (GPAARPGGPAAPSAPAA) has biased composition (low complexity). The span at 113–129 (PSAPAPGAPAASPPASQ) shows a compositional bias: pro residues. Low complexity-rich tracts occupy residues 130–159 (PRPI…ASGP), 167–178 (GGPAAPGRARPG), and 187–196 (SAPSAPSAGG). A compositionally biased stretch (pro residues) spans 198–208 (RPGPRPGPRPS). Low complexity predominate over residues 219–233 (SAGPRQSAGQSGSGP). Composition is skewed to pro residues over residues 234–254 (ASPP…PRPG) and 262–273 (RPSPGSMPPRPG). Gly residues-rich tracts occupy residues 275–291 (RPGG…GSGG) and 306–389 (GAPG…GGRG). Basic residues predominate over residues 390–401 (RPGRQRKSKRAK). Residues 514-686 (IRPPVVTVMG…IILTADASLD (173 aa)) enclose the tr-type G domain. The segment at 523–530 (GHVDHGKT) is G1. Residue 523–530 (GHVDHGKT) participates in GTP binding. The G2 stretch occupies residues 548–552 (GITQH). A G3 region spans residues 573 to 576 (DTPG). GTP contacts are provided by residues 573–577 (DTPGH) and 627–630 (NKVD). A G4 region spans residues 627 to 630 (NKVD). Residues 663-665 (SAR) are G5.

This sequence belongs to the TRAFAC class translation factor GTPase superfamily. Classic translation factor GTPase family. IF-2 subfamily.

The protein resides in the cytoplasm. Functionally, one of the essential components for the initiation of protein synthesis. Protects formylmethionyl-tRNA from spontaneous hydrolysis and promotes its binding to the 30S ribosomal subunits. Also involved in the hydrolysis of GTP during the formation of the 70S ribosomal complex. The polypeptide is Translation initiation factor IF-2 (Frankia alni (strain DSM 45986 / CECT 9034 / ACN14a)).